We begin with the raw amino-acid sequence, 355 residues long: Phospho-N-acetylmuramoyl-pentapeptide-transferase (355 aa).

The next 10 membrane-spanning stretches (helical) occupy residues 3–23 (GVLIAAMVALVVSLLGTPWVI), 56–76 (VIIVAALAGYFLAHLVTGIGF), 80–100 (GLLVLMVMTGLGLVGFLDDYI), 120–140 (AAVAIVFGLLAVRFKNDAGLL), 156–176 (VGIIAFPLLAWIIIAATSNAV), 185–205 (LAAGTSAMVFGAYVIISFWQF), 224–244 (PLDVALVAAAAMGACFGFLWW), 251–271 (IFMGDTGSLALGGAFASIAIV), 276–296 (LLLVVLGGLFVIETLSVMIQV), and 330–350 (FWIVSGLAVAFGLGLFYAEFL).

The protein belongs to the glycosyltransferase 4 family. MraY subfamily. Mg(2+) serves as cofactor.

It is found in the cell membrane. It carries out the reaction UDP-N-acetyl-alpha-D-muramoyl-L-alanyl-gamma-D-glutamyl-meso-2,6-diaminopimeloyl-D-alanyl-D-alanine + di-trans,octa-cis-undecaprenyl phosphate = di-trans,octa-cis-undecaprenyl diphospho-N-acetyl-alpha-D-muramoyl-L-alanyl-D-glutamyl-meso-2,6-diaminopimeloyl-D-alanyl-D-alanine + UMP. Its pathway is cell wall biogenesis; peptidoglycan biosynthesis. Functionally, catalyzes the initial step of the lipid cycle reactions in the biosynthesis of the cell wall peptidoglycan: transfers peptidoglycan precursor phospho-MurNAc-pentapeptide from UDP-MurNAc-pentapeptide onto the lipid carrier undecaprenyl phosphate, yielding undecaprenyl-pyrophosphoryl-MurNAc-pentapeptide, known as lipid I. This is Phospho-N-acetylmuramoyl-pentapeptide-transferase from Frankia casuarinae (strain DSM 45818 / CECT 9043 / HFP020203 / CcI3).